The sequence spans 137 residues: Large ribosomal subunit protein uL16 (137 aa).

This sequence belongs to the universal ribosomal protein uL16 family. As to quaternary structure, part of the 50S ribosomal subunit.

Binds 23S rRNA and is also seen to make contacts with the A and possibly P site tRNAs. The chain is Large ribosomal subunit protein uL16 from Wolbachia pipientis wMel.